Consider the following 185-residue polypeptide: ATP-dependent protease subunit HslV (185 aa).

Thr-14 is an active-site residue. Ala-168, Cys-171, and Thr-174 together coordinate Na(+).

This sequence belongs to the peptidase T1B family. HslV subfamily. In terms of assembly, a double ring-shaped homohexamer of HslV is capped on each side by a ring-shaped HslU homohexamer. The assembly of the HslU/HslV complex is dependent on binding of ATP.

It is found in the cytoplasm. It carries out the reaction ATP-dependent cleavage of peptide bonds with broad specificity.. With respect to regulation, allosterically activated by HslU binding. Functionally, protease subunit of a proteasome-like degradation complex believed to be a general protein degrading machinery. This Hyphomonas neptunium (strain ATCC 15444) protein is ATP-dependent protease subunit HslV.